The chain runs to 490 residues: NAI2-like protein (490 aa).

A signal peptide spans 1-24 (MGRKYVVLGLAVCLFLSSFNEVSC). Disordered regions lie at residues 43–83 (EEGE…VDKF) and 155–206 (AATN…FNKG). Positions 136–163 (IADERRQRLEDIERKLKAAAATNIVVED) form a coiled coil. A compositionally biased stretch (basic and acidic residues) spans 171-183 (KVEETQEVVKFES). The span at 184 to 199 (ESSSASSESRRQSSSS) shows a compositional bias: low complexity. The stretch at 433–465 (TFEKTVANLSRVIEEASQAYEEYHVVVRKWKEE) forms a coiled coil.

The sequence is that of NAI2-like protein from Arabidopsis thaliana (Mouse-ear cress).